A 66-amino-acid polypeptide reads, in one-letter code: MPKMKTKSAAKKRFKITGTGKIKAAAAGKRHGMIKRSNKFIRDARGTMVLADADAKIVKQFLPNGL.

This sequence belongs to the bacterial ribosomal protein bL35 family.

This Brucella anthropi (strain ATCC 49188 / DSM 6882 / CCUG 24695 / JCM 21032 / LMG 3331 / NBRC 15819 / NCTC 12168 / Alc 37) (Ochrobactrum anthropi) protein is Large ribosomal subunit protein bL35.